Consider the following 95-residue polypeptide: Small ribosomal subunit protein uS19 (95 aa).

It belongs to the universal ribosomal protein uS19 family.

Protein S19 forms a complex with S13 that binds strongly to the 16S ribosomal RNA. In Thermosipho melanesiensis (strain DSM 12029 / CIP 104789 / BI429), this protein is Small ribosomal subunit protein uS19.